Consider the following 249-residue polypeptide: Probable transcriptional regulatory protein HY04AAS1_0501 (249 aa).

This sequence belongs to the TACO1 family.

The protein localises to the cytoplasm. This is Probable transcriptional regulatory protein HY04AAS1_0501 from Hydrogenobaculum sp. (strain Y04AAS1).